A 195-amino-acid chain; its full sequence is dITP/XTP pyrophosphatase (195 aa).

8–13 contributes to the substrate binding site; it reads SNNQGK. Mg(2+)-binding residues include E39 and D68. The active-site Proton acceptor is the D68. Substrate-binding positions include S69, 149-152, K172, and 177-178; these read FGYD and HR.

This sequence belongs to the HAM1 NTPase family. As to quaternary structure, homodimer. Mg(2+) is required as a cofactor.

The catalysed reaction is XTP + H2O = XMP + diphosphate + H(+). It catalyses the reaction dITP + H2O = dIMP + diphosphate + H(+). It carries out the reaction ITP + H2O = IMP + diphosphate + H(+). In terms of biological role, pyrophosphatase that catalyzes the hydrolysis of nucleoside triphosphates to their monophosphate derivatives, with a high preference for the non-canonical purine nucleotides XTP (xanthosine triphosphate), dITP (deoxyinosine triphosphate) and ITP. Seems to function as a house-cleaning enzyme that removes non-canonical purine nucleotides from the nucleotide pool, thus preventing their incorporation into DNA/RNA and avoiding chromosomal lesions. The protein is dITP/XTP pyrophosphatase of Staphylococcus aureus (strain COL).